Consider the following 442-residue polypeptide: C4-dicarboxylate transport protein (442 aa).

Transmembrane regions (helical) follow at residues 19–39, 55–75, 90–110, 161–181, 199–219, 232–252, 318–338, and 366–386; these read QLYF…HFEP, LVKM…IAGM, AYFL…AHVV, ILQV…VGDA, LVGI…AFTI, WLVG…LGFV, IYMT…LTLG, and AATL…ILGV.

Belongs to the dicarboxylate/amino acid:cation symporter (DAACS) (TC 2.A.23) family.

It is found in the cell inner membrane. Responsible for the transport of dicarboxylates such as succinate, fumarate, and malate from the periplasm across the membrane. The protein is C4-dicarboxylate transport protein of Delftia acidovorans (strain DSM 14801 / SPH-1).